Consider the following 290-residue polypeptide: uncharacterized protein (290 aa).

The AB hydrolase-1 domain occupies 30–274 (PTILLLHGFP…YDTGHFALET (245 aa)). The active site involves His-269.

It belongs to the DmpD/TodF/XylF esterase family.

This is an uncharacterized protein from Saccharomyces cerevisiae (strain ATCC 204508 / S288c) (Baker's yeast).